The chain runs to 279 residues: Movement protein (279 aa).

Belongs to the cucumovirus movement protein family.

The protein localises to the host cell junction. It localises to the host plasmodesma. Functionally, transports viral genome to neighboring plant cells directly through plasmosdesmata, without any budding. The movement protein allows efficient cell to cell propagation, by bypassing the host cell wall barrier. Acts by forming a tubular structure at the host plasmodesmata, enlarging it enough to allow free passage of virion capsids. This chain is Movement protein, found in Cucumber mosaic virus (strain Ixora) (CMV).